We begin with the raw amino-acid sequence, 782 residues long: E3 ubiquitin-protein ligase SopA (782 aa).

Residues 140–170 are disordered; that stretch reads SANNRPTVSEGRTPPVSPSLSLQATSSPSSP. Low complexity predominate over residues 157–170; sequence PSLSLQATSSPSSP. Catalysis depends on Cys-753, which acts as the Glycyl thioester intermediate.

This sequence belongs to the SopA E3 ligase family. Ubiquitinated in the presence of host E1 ubiquitin-activating enzyme, E2 ubiquitin-conjugating enzyme and ubiquitin.

It localises to the secreted. It is found in the host cell. It carries out the reaction S-ubiquitinyl-[E2 ubiquitin-conjugating enzyme]-L-cysteine + [acceptor protein]-L-lysine = [E2 ubiquitin-conjugating enzyme]-L-cysteine + N(6)-ubiquitinyl-[acceptor protein]-L-lysine.. In terms of biological role, effector proteins function to alter host cell physiology and promote bacterial survival in host tissues. This protein is an E3 ubiquitin ligase that interferes with host's ubiquitination pathway. The sequence is that of E3 ubiquitin-protein ligase SopA (sopA) from Salmonella agona (strain SL483).